A 383-amino-acid polypeptide reads, in one-letter code: Interleukin-13 receptor subunit alpha-2 (383 aa).

An N-terminal signal peptide occupies residues 1-21; the sequence is MAFVHIRCLCFILLCTITGYS. Residues 22 to 334 lie on the Extracellular side of the membrane; sequence LEIKVNPPQD…WEGYTGPDSK (313 aa). 3 consecutive Fibronectin type-III domains span residues 28-128, 131-219, and 234-332; these read PPQD…SDEG, ETKI…PIRS, and PPEF…TGPD. A disulfide bridge connects residues Cys59 and Cys107. The N-linked (GlcNAc...) asparagine glycan is linked to Asn109. Cys139 and Cys149 are oxidised to a cystine. Asn162 carries N-linked (GlcNAc...) asparagine glycosylation. Cys178 and Cys191 form a disulfide bridge. N-linked (GlcNAc...) asparagine glycosylation is found at Asn209 and Asn293. The cysteines at positions 263 and 310 are disulfide-linked. The WSXWS motif motif lies at 316 to 320; the sequence is WSEWS. A helical membrane pass occupies residues 335-355; sequence IIFIVPVCLFFIFLLLLLCLI. At 356–383 the chain is on the cytoplasmic side; the sequence is VEKEEPEPTLSLHVDLNKEVCAYEDTLC.

It belongs to the type I cytokine receptor family. Type 5 subfamily. Interacts with IL4RA. Interacts with high affinity to interleukin-13 (IL13), but not to interleukin-4 (IL4). Post-translationally, cleaved by MMP8 leading to a soluble form that is also able to interact with IL13.

Its subcellular location is the cell membrane. It localises to the secreted. Functionally, cell surface receptor that plays a role in the regulation of IL-13-mediated responses. Functions as a decoy receptor that inhibits IL-13- and IL-4-mediated signal transduction via the JAK-STAT pathway and thereby modulates immune responses and inflammation. Serves as a functional signaling receptor for IL-13 in an alternative pathway involving AP-1 ultimately leading to the production of TGFB1. This Mus musculus (Mouse) protein is Interleukin-13 receptor subunit alpha-2 (Il13ra2).